Reading from the N-terminus, the 660-residue chain is GTP-binding protein BRASSINAZOLE INSENSITIVE PALE GREEN 2, chloroplastic (660 aa).

The N-terminal 53 residues, 1-53 (MVVLISSTVTICNVKPKLEDGNFRVSRLIHRPEVPFFSGLSNEKKKKCAVSVM), are a transit peptide targeting the chloroplast. 2 disordered regions span residues 127 to 158 (EGDEHVENDELAGFEMVDDDADEEEEGEDDEM) and 191 to 212 (NDVELDGFAPAGVGYGNVTEEK). Acidic residues predominate over residues 130 to 158 (EHVENDELAGFEMVDDDADEEEEGEDDEM). Residues 273–457 (STRLIKPMSN…MYDTPGLLHP (185 aa)) enclose the CP-type G domain.

This sequence belongs to the TRAFAC class YlqF/YawG GTPase family. As to quaternary structure, binds to chloroplast 16S and 23S ribosomal RNAs. Mostly expressed in stems, petioles, leaves and flowers and, at low levels, also in roots.

It is found in the plastid. It localises to the chloroplast stroma. Its function is as follows. Required for brassinosteroid- (BR) mediated post-transcriptional and translational regulation in the chloroplast, including accumulation of chloroplast rRNA. Involved in chloroplast differentiation. The protein is GTP-binding protein BRASSINAZOLE INSENSITIVE PALE GREEN 2, chloroplastic of Arabidopsis thaliana (Mouse-ear cress).